A 240-amino-acid polypeptide reads, in one-letter code: 1-(5-phosphoribosyl)-5-[(5-phosphoribosylamino)methylideneamino] imidazole-4-carboxamide isomerase (240 aa).

Residue Asp8 is the Proton acceptor of the active site. Asp129 (proton donor) is an active-site residue.

This sequence belongs to the HisA/HisF family.

It is found in the cytoplasm. It carries out the reaction 1-(5-phospho-beta-D-ribosyl)-5-[(5-phospho-beta-D-ribosylamino)methylideneamino]imidazole-4-carboxamide = 5-[(5-phospho-1-deoxy-D-ribulos-1-ylimino)methylamino]-1-(5-phospho-beta-D-ribosyl)imidazole-4-carboxamide. Its pathway is amino-acid biosynthesis; L-histidine biosynthesis; L-histidine from 5-phospho-alpha-D-ribose 1-diphosphate: step 4/9. In Dinoroseobacter shibae (strain DSM 16493 / NCIMB 14021 / DFL 12), this protein is 1-(5-phosphoribosyl)-5-[(5-phosphoribosylamino)methylideneamino] imidazole-4-carboxamide isomerase.